A 905-amino-acid polypeptide reads, in one-letter code: DNA gyrase subunit A (905 aa).

In terms of domain architecture, Topo IIA-type catalytic spans 35–524; sequence IPDVRDGLKP…GEFDQDIEDL (490 aa). Tyr-123 acts as the O-(5'-phospho-DNA)-tyrosine intermediate in catalysis. Residues 551 to 557 carry the GyrA-box motif; the sequence is QKRGGKG.

Belongs to the type II topoisomerase GyrA/ParC subunit family. As to quaternary structure, heterotetramer, composed of two GyrA and two GyrB chains. In the heterotetramer, GyrA contains the active site tyrosine that forms a transient covalent intermediate with DNA, while GyrB binds cofactors and catalyzes ATP hydrolysis.

It localises to the cytoplasm. The enzyme catalyses ATP-dependent breakage, passage and rejoining of double-stranded DNA.. Its function is as follows. A type II topoisomerase that negatively supercoils closed circular double-stranded (ds) DNA in an ATP-dependent manner to modulate DNA topology and maintain chromosomes in an underwound state. Negative supercoiling favors strand separation, and DNA replication, transcription, recombination and repair, all of which involve strand separation. Also able to catalyze the interconversion of other topological isomers of dsDNA rings, including catenanes and knotted rings. Type II topoisomerases break and join 2 DNA strands simultaneously in an ATP-dependent manner. The chain is DNA gyrase subunit A from Rickettsia typhi (strain ATCC VR-144 / Wilmington).